The sequence spans 276 residues: Sulfur carrier protein FdhD (276 aa).

Residue cysteine 120 is the Cysteine persulfide intermediate of the active site.

It belongs to the FdhD family.

It localises to the cytoplasm. Functionally, required for formate dehydrogenase (FDH) activity. Acts as a sulfur carrier protein that transfers sulfur from IscS to the molybdenum cofactor prior to its insertion into FDH. The protein is Sulfur carrier protein FdhD of Bordetella parapertussis (strain 12822 / ATCC BAA-587 / NCTC 13253).